An 88-amino-acid chain; its full sequence is uncharacterized protein (88 aa).

The next 2 membrane-spanning stretches (helical) occupy residues 8 to 28 (IFLS…SIFF) and 45 to 65 (ELLR…VINL).

The protein resides in the membrane. This is an uncharacterized protein from Saccharomyces cerevisiae (strain ATCC 204508 / S288c) (Baker's yeast).